Here is a 320-residue protein sequence, read N- to C-terminus: Malate dehydrogenase (320 aa).

NAD(+)-binding positions include 10–15 (GAGQIG) and aspartate 34. Arginine 83 and arginine 89 together coordinate substrate. NAD(+) contacts are provided by residues asparagine 96 and 119 to 121 (ITN). The substrate site is built by asparagine 121 and arginine 152. Histidine 176 serves as the catalytic Proton acceptor.

The protein belongs to the LDH/MDH superfamily. MDH type 3 family.

The enzyme catalyses (S)-malate + NAD(+) = oxaloacetate + NADH + H(+). Functionally, catalyzes the reversible oxidation of malate to oxaloacetate. The polypeptide is Malate dehydrogenase (Beijerinckia indica subsp. indica (strain ATCC 9039 / DSM 1715 / NCIMB 8712)).